A 504-amino-acid chain; its full sequence is Anaerobic nitric oxide reductase transcription regulator NorR (504 aa).

The residue at position 57 (aspartate 57) is a 4-aspartylphosphate. The Sigma-54 factor interaction domain occupies 187 to 416 (MIGLSPGMTQ…LEHAIHRAVV (230 aa)). ATP is bound by residues 215-222 (GETGTGKE) and 278-287 (ADNGTLFLDE). Residues 479 to 498 (WAACARMLETDVANLHRLAK) constitute a DNA-binding region (H-T-H motif).

It participates in nitrogen metabolism; nitric oxide reduction. Its function is as follows. Required for the expression of anaerobic nitric oxide (NO) reductase, acts as a transcriptional activator for at least the norVW operon. Activation also requires sigma-54. The polypeptide is Anaerobic nitric oxide reductase transcription regulator NorR (Escherichia coli O157:H7).